The chain runs to 1036 residues: Pre-mRNA-processing factor 39-2 (1036 aa).

The interval 1 to 24 (MVTTEVRTAVSDKEPLQRSPELDS) is disordered. HAT repeat units follow at residues 62–94 (DDIE…HKIK), 96–128 (CTLE…FAVA), 131–166 (EDPH…YLLG), 168–201 (QQWS…IAAS), 278–310 (CFET…FGET), and 312–344 (GDFD…FVES). Disordered regions lie at residues 595–618 (GISS…YGTQ), 714–767 (PSGS…PVGT), and 995–1036 (KGDE…ISSI). Over residues 714 to 726 (PSGSQSPQSYQSQ) the composition is skewed to low complexity. Residues 740 to 755 (RDLNQMHRDSKPRSQE) show a composition bias toward basic and acidic residues. Positions 1002–1036 (SMPQGSTTNSDIQKSQESGAVNEANLSSDTSISSI) are enriched in polar residues.

Belongs to the PRP39 family.

Its subcellular location is the nucleus. Involved in pre-mRNA splicing. This Arabidopsis thaliana (Mouse-ear cress) protein is Pre-mRNA-processing factor 39-2.